A 465-amino-acid polypeptide reads, in one-letter code: A-type ATP synthase subunit B (465 aa).

Belongs to the ATPase alpha/beta chains family. Has multiple subunits with at least A(3), B(3), C, D, E, F, H, I and proteolipid K(x).

It localises to the cell membrane. Component of the A-type ATP synthase that produces ATP from ADP in the presence of a proton gradient across the membrane. The B chain is a regulatory subunit. This Pyrococcus horikoshii (strain ATCC 700860 / DSM 12428 / JCM 9974 / NBRC 100139 / OT-3) protein is A-type ATP synthase subunit B.